The following is a 538-amino-acid chain: Phosphoenolpyruvate carboxykinase (ATP) (538 aa).

Residues R61, Y195, and K201 each contribute to the substrate site. Residues K201, H220, and 236-244 (GLSGTGKTT) each bind ATP. Positions 201 and 220 each coordinate Mn(2+). D257 lines the Mn(2+) pocket. ATP is bound by residues E285, R323, and T449. R323 serves as a coordination point for substrate.

Belongs to the phosphoenolpyruvate carboxykinase (ATP) family. The cofactor is Mn(2+).

It is found in the cytoplasm. The enzyme catalyses oxaloacetate + ATP = phosphoenolpyruvate + ADP + CO2. It functions in the pathway carbohydrate biosynthesis; gluconeogenesis. Its function is as follows. Involved in the gluconeogenesis. Catalyzes the conversion of oxaloacetate (OAA) to phosphoenolpyruvate (PEP) through direct phosphoryl transfer between the nucleoside triphosphate and OAA. This is Phosphoenolpyruvate carboxykinase (ATP) from Afipia carboxidovorans (strain ATCC 49405 / DSM 1227 / KCTC 32145 / OM5) (Oligotropha carboxidovorans).